The chain runs to 352 residues: Probable cytosolic iron-sulfur protein assembly protein CIAO1 homolog (352 aa).

WD repeat units lie at residues 12–51, 58–97, 106–145, 151–190, 195–234, 245–284, and 303–352; these read ASNKRLWSLSWNHKGSVLISSGEDRVIKLWAKCNDQLWGS, AHKKSIRCVTWSPCGTYIASASFDGTVTIWKISEAHSAPE, GHTSEVKCVAWCPSGHLIATCGRDKSVWLWEFDDEEDVQC, PHSQDVKSVAWHPHGEVLVSTSYDNKINVYREELDDWTVF, GHDSTVWKAEFSPSGDILASCSDDLCVKLWSWEGVCGKSS, YHTRTIFDLNWSPDSQLLASCGSDNRLCIYKMPANGLTHI, and AHSE…EYEL.

The protein belongs to the WD repeat CIA1 family.

Its function is as follows. Essential component of the cytosolic iron-sulfur (Fe/S) protein assembly machinery. Required for the maturation of extramitochondrial Fe/S proteins. This is Probable cytosolic iron-sulfur protein assembly protein CIAO1 homolog from Schistosoma japonicum (Blood fluke).